Reading from the N-terminus, the 248-residue chain is 14-3-3-like protein G-BOX factor 14 kappa (248 aa).

Residues Ser70, Ser112, and Ser193 each carry the phosphoserine modification. Thr214 is modified (phosphothreonine).

It belongs to the 14-3-3 family. Interacts with the isocitrate dehydrogenase IDH3, and malate dehydrogenases MDH1 and MDH2. Interacts with CINV1.

Its subcellular location is the nucleus. It localises to the cytoplasm. Is associated with a DNA binding complex that binds to the G box, a well-characterized cis-acting DNA regulatory element found in plant genes. Involved in the regulation of nutrient metabolism. Negative regulator of freezing tolerance that modulates cold-responsive C-repeat-binding factors (CBF) DREB1A AND DREB1B proteins stability by facilitating their ubiquitin-mediated degradation; this processus is counteracted by B1L. This is 14-3-3-like protein G-BOX factor 14 kappa from Arabidopsis thaliana (Mouse-ear cress).